We begin with the raw amino-acid sequence, 161 residues long: Phosphopantetheine adenylyltransferase (161 aa).

Residue T10 participates in substrate binding. ATP is bound by residues 10-11 and H18; that span reads TF. Substrate is bound by residues K42, L74, and R88. ATP-binding positions include 89–91, E99, and 124–130; these read GLR and NAFISSS.

Belongs to the bacterial CoaD family. In terms of assembly, homohexamer. Requires Mg(2+) as cofactor.

It localises to the cytoplasm. It catalyses the reaction (R)-4'-phosphopantetheine + ATP + H(+) = 3'-dephospho-CoA + diphosphate. It participates in cofactor biosynthesis; coenzyme A biosynthesis; CoA from (R)-pantothenate: step 4/5. Reversibly transfers an adenylyl group from ATP to 4'-phosphopantetheine, yielding dephospho-CoA (dPCoA) and pyrophosphate. This chain is Phosphopantetheine adenylyltransferase, found in Wolinella succinogenes (strain ATCC 29543 / DSM 1740 / CCUG 13145 / JCM 31913 / LMG 7466 / NCTC 11488 / FDC 602W) (Vibrio succinogenes).